A 133-amino-acid chain; its full sequence is Small ribosomal subunit protein uS8 (133 aa).

Belongs to the universal ribosomal protein uS8 family. As to quaternary structure, part of the 30S ribosomal subunit. Contacts proteins S5 and S12.

Functionally, one of the primary rRNA binding proteins, it binds directly to 16S rRNA central domain where it helps coordinate assembly of the platform of the 30S subunit. The chain is Small ribosomal subunit protein uS8 from Acaryochloris marina (strain MBIC 11017).